Reading from the N-terminus, the 284-residue chain is Bifunctional protein FolD (284 aa).

NADP(+)-binding positions include 166-168 (GAS) and I232.

It belongs to the tetrahydrofolate dehydrogenase/cyclohydrolase family. In terms of assembly, homodimer.

It catalyses the reaction (6R)-5,10-methylene-5,6,7,8-tetrahydrofolate + NADP(+) = (6R)-5,10-methenyltetrahydrofolate + NADPH. It carries out the reaction (6R)-5,10-methenyltetrahydrofolate + H2O = (6R)-10-formyltetrahydrofolate + H(+). It functions in the pathway one-carbon metabolism; tetrahydrofolate interconversion. Functionally, catalyzes the oxidation of 5,10-methylenetetrahydrofolate to 5,10-methenyltetrahydrofolate and then the hydrolysis of 5,10-methenyltetrahydrofolate to 10-formyltetrahydrofolate. This Alteromonas mediterranea (strain DSM 17117 / CIP 110805 / LMG 28347 / Deep ecotype) protein is Bifunctional protein FolD.